A 318-amino-acid chain; its full sequence is Cobalamin biosynthesis protein CobD (318 aa).

Helical transmembrane passes span 51–71 (VGGV…AWGA), 77–97 (LVHP…CLAA), 153–173 (DGVI…ALAY), 206–226 (LIPA…AGLS), and 296–316 (MYGA…ILTI).

Belongs to the CobD/CbiB family.

The protein resides in the cell membrane. It participates in cofactor biosynthesis; adenosylcobalamin biosynthesis. Its function is as follows. Converts cobyric acid to cobinamide by the addition of aminopropanol on the F carboxylic group. In Geobacter metallireducens (strain ATCC 53774 / DSM 7210 / GS-15), this protein is Cobalamin biosynthesis protein CobD.